Reading from the N-terminus, the 460-residue chain is A-type ATP synthase subunit B (460 aa).

It belongs to the ATPase alpha/beta chains family. In terms of assembly, has multiple subunits with at least A(3), B(3), C, D, E, F, H, I and proteolipid K(x).

Its subcellular location is the cell membrane. Functionally, component of the A-type ATP synthase that produces ATP from ADP in the presence of a proton gradient across the membrane. The B chain is a regulatory subunit. The protein is A-type ATP synthase subunit B of Methanosarcina acetivorans (strain ATCC 35395 / DSM 2834 / JCM 12185 / C2A).